The following is a 425-amino-acid chain: Secernin-2 (425 aa).

Residue C12 is part of the active site. T52 carries the post-translational modification Phosphothreonine.

Belongs to the peptidase C69 family. Secernin subfamily.

The chain is Secernin-2 (SCRN2) from Homo sapiens (Human).